The following is a 273-amino-acid chain: Anthocyanin regulatory C1 protein (273 aa).

2 HTH myb-type domains span residues 9 to 65 (KEGV…RPNI) and 66 to 116 (RRGN…GRRA). 2 DNA-binding regions (H-T-H motif) span residues 37–61 (WREV…LNYL) and 89–112 (WSLI…NSTL). Disordered regions lie at residues 137-164 (ATPA…SAGT) and 196-220 (AGET…SDDC). Residues 204-214 (AGGGGGGGGEA) show a composition bias toward gly residues.

It is found in the nucleus. Functionally, controls the expression of genes involved in anthocyanin biosynthesis. Regulates the expression of at least 3 structural genes: chalcone synthase, dihydroflavonol reductase and flavonol O(3) glucosyltransferase. C1 acts as a trans-acting factor. In Zea mays (Maize), this protein is Anthocyanin regulatory C1 protein (C1).